A 495-amino-acid polypeptide reads, in one-letter code: 3-octaprenyl-4-hydroxybenzoate carboxy-lyase (495 aa).

Residue N172 participates in Mn(2+) binding. Residues 175–177 (IYR), 189–191 (RWL), and 194–195 (RG) each bind prenylated FMN. E238 contributes to the Mn(2+) binding site. Catalysis depends on D287, which acts as the Proton donor.

Belongs to the UbiD family. As to quaternary structure, homohexamer. Prenylated FMN is required as a cofactor. Requires Mn(2+) as cofactor.

The protein localises to the cell membrane. It carries out the reaction a 4-hydroxy-3-(all-trans-polyprenyl)benzoate + H(+) = a 2-(all-trans-polyprenyl)phenol + CO2. Its pathway is cofactor biosynthesis; ubiquinone biosynthesis. In terms of biological role, catalyzes the decarboxylation of 3-octaprenyl-4-hydroxy benzoate to 2-octaprenylphenol, an intermediate step in ubiquinone biosynthesis. The sequence is that of 3-octaprenyl-4-hydroxybenzoate carboxy-lyase from Yersinia pestis bv. Antiqua (strain Angola).